The primary structure comprises 383 residues: 8-amino-7-oxononanoate synthase (383 aa).

Positions 27 and 34 each coordinate substrate. 114–115 (GY) is a binding site for pyridoxal 5'-phosphate. Histidine 139 is a binding site for substrate. Residues serine 187, 212-215 (DDAH), and 232-235 (TLSK) contribute to the pyridoxal 5'-phosphate site. Lysine 235 is subject to N6-(pyridoxal phosphate)lysine. Threonine 344 lines the substrate pocket.

This sequence belongs to the class-II pyridoxal-phosphate-dependent aminotransferase family. BioF subfamily. As to quaternary structure, homodimer. Pyridoxal 5'-phosphate serves as cofactor.

It catalyses the reaction 6-carboxyhexanoyl-[ACP] + L-alanine + H(+) = (8S)-8-amino-7-oxononanoate + holo-[ACP] + CO2. It participates in cofactor biosynthesis; biotin biosynthesis. Functionally, catalyzes the decarboxylative condensation of pimeloyl-[acyl-carrier protein] and L-alanine to produce 8-amino-7-oxononanoate (AON), [acyl-carrier protein], and carbon dioxide. The polypeptide is 8-amino-7-oxononanoate synthase (Methylorubrum extorquens (strain CM4 / NCIMB 13688) (Methylobacterium extorquens)).